A 537-amino-acid chain; its full sequence is Putative cysteine ligase BshC (537 aa).

It belongs to the BshC family.

Its function is as follows. Involved in bacillithiol (BSH) biosynthesis. May catalyze the last step of the pathway, the addition of cysteine to glucosamine malate (GlcN-Mal) to generate BSH. This is Putative cysteine ligase BshC from Staphylococcus saprophyticus subsp. saprophyticus (strain ATCC 15305 / DSM 20229 / NCIMB 8711 / NCTC 7292 / S-41).